Consider the following 106-residue polypeptide: MALKIRLRQHGRTNRSFFRLVVTDARSPRDGKYVEALGWYNPVEAEDDKKLFFKADRIQHWLNLGAELTESAASLIKKTSPEIIRAQTEKKLNSLAKAATKRKKKD.

The protein belongs to the bacterial ribosomal protein bS16 family.

This is Small ribosomal subunit protein bS16 from Protochlamydia amoebophila (strain UWE25).